The primary structure comprises 300 residues: Transcriptional dual regulator GltC (300 aa).

In terms of domain architecture, HTH lysR-type spans 1 to 58 (MELRQLRYFMEVAEREHVSEAADHLHVAQSAISRQIANLEEELNVTLFEREGRNIKLT). Residues 18–37 (VSEAADHLHVAQSAISRQIA) constitute a DNA-binding region (H-T-H motif).

It belongs to the LysR transcriptional regulatory family. As to quaternary structure, interacts with gutamate dehydrogenase RocG.

Its activity is regulated as follows. Activated by alpha-ketoglutarate and inhibited by glutamate and by RocG. Positive regulator of glutamate biosynthesis (gltAB genes). Negatively regulates its own expression. This Bacillus subtilis (strain 168) protein is Transcriptional dual regulator GltC (gltC).